Consider the following 85-residue polypeptide: Elongation factor 1-beta (85 aa).

It belongs to the EF-1-beta/EF-1-delta family.

Functionally, promotes the exchange of GDP for GTP in EF-1-alpha/GDP, thus allowing the regeneration of EF-1-alpha/GTP that could then be used to form the ternary complex EF-1-alpha/GTP/AAtRNA. In Methanospirillum hungatei JF-1 (strain ATCC 27890 / DSM 864 / NBRC 100397 / JF-1), this protein is Elongation factor 1-beta.